The chain runs to 142 residues: Large ribosomal subunit protein uL11 (142 aa).

The protein belongs to the universal ribosomal protein uL11 family. Part of the ribosomal stalk of the 50S ribosomal subunit. Interacts with L10 and the large rRNA to form the base of the stalk. L10 forms an elongated spine to which L12 dimers bind in a sequential fashion forming a multimeric L10(L12)X complex. In terms of processing, one or more lysine residues are methylated.

Functionally, forms part of the ribosomal stalk which helps the ribosome interact with GTP-bound translation factors. The sequence is that of Large ribosomal subunit protein uL11 from Shewanella sp. (strain W3-18-1).